A 637-amino-acid chain; its full sequence is Chaperone protein HtpG (637 aa).

Residues 1-345 (MSQQETHGFQ…SNDLPLNVSR (345 aa)) are a; substrate-binding. The b stretch occupies residues 346–562 (EILQDNHVTK…EGEMSTQMIK (217 aa)). Positions 563 to 637 (LMQAAGQPVP…MNQMLLANMK (75 aa)) are c.

The protein belongs to the heat shock protein 90 family. In terms of assembly, homodimer.

It localises to the cytoplasm. In terms of biological role, molecular chaperone. Has ATPase activity. This is Chaperone protein HtpG from Shewanella baltica (strain OS185).